Reading from the N-terminus, the 399-residue chain is Elongation factor Tu (399 aa).

The region spanning 10-204 (KPHVNIGTIG…SVDESIPEPE (195 aa)) is the tr-type G domain. The interval 19–26 (GHVDHGKT) is G1. 19–26 (GHVDHGKT) lines the GTP pocket. Threonine 26 contacts Mg(2+). Positions 60–64 (GITIN) are G2. The tract at residues 81 to 84 (DCPG) is G3. GTP-binding positions include 81–85 (DCPGH) and 136–139 (NKCD). The G4 stretch occupies residues 136-139 (NKCD). Residues 174 to 176 (SAL) are G5.

This sequence belongs to the TRAFAC class translation factor GTPase superfamily. Classic translation factor GTPase family. EF-Tu/EF-1A subfamily. Monomer.

It localises to the cytoplasm. It carries out the reaction GTP + H2O = GDP + phosphate + H(+). Its function is as follows. GTP hydrolase that promotes the GTP-dependent binding of aminoacyl-tRNA to the A-site of ribosomes during protein biosynthesis. The protein is Elongation factor Tu of Prochlorococcus marinus (strain MIT 9211).